A 424-amino-acid polypeptide reads, in one-letter code: MHEPMKTLKNIHAEIRICQKFPKSTVQKRFSEFEELIKAASKNARNWKPISSVELFQGDSSLNELFEKLVIGTCELRDGELFENVNDLTINPSNIHVYKLHKDGPLSQNIGDDDGDESIIGSQLWQLPCVEFDSIWENLIYDSNLKNEVMSYVAALARLSEKHVNTKIINVNRLILLTGPPGTGKTSLCKGLAQHLSIRMNDKYSKSVMLEINSHSLFSKWFSESGKLVQKMFDQIDELAEDEKCMVFVLIDEVESLGMCRESSSSRSEPSDAIRAVNALLTQIDRIRRRDNVLILCTSNLESTLDKALVDRADIVKNVGQPSDFARYSMLKSSIMELARIGVVIDNEVHTDYWPQDICDTKAPRNEFTEILFKIAQEARGLSGRAISMLPTLVYSKSPEETITLPNCMNLFLEAVKERLSRNN.

Position 179 to 186 (179 to 186) interacts with ATP; the sequence is GPPGTGKT.

Belongs to the AAA ATPase family. PCH2 subfamily.

Plays a key role in chromosome recombination during meiosis. This Caenorhabditis elegans protein is Putative pachytene checkpoint protein 2 (pch-2).